Here is a 238-residue protein sequence, read N- to C-terminus: 7-cyano-7-deazaguanine synthase (238 aa).

10 to 20 contributes to the ATP binding site; sequence LSGGLDSSTVL. Zn(2+) contacts are provided by Cys190, Cys198, Cys201, and Cys204.

Belongs to the QueC family. It depends on Zn(2+) as a cofactor.

The catalysed reaction is 7-carboxy-7-deazaguanine + NH4(+) + ATP = 7-cyano-7-deazaguanine + ADP + phosphate + H2O + H(+). The protein operates within purine metabolism; 7-cyano-7-deazaguanine biosynthesis. In terms of biological role, catalyzes the ATP-dependent conversion of 7-carboxy-7-deazaguanine (CDG) to 7-cyano-7-deazaguanine (preQ(0)). The sequence is that of 7-cyano-7-deazaguanine synthase from Thermoplasma acidophilum (strain ATCC 25905 / DSM 1728 / JCM 9062 / NBRC 15155 / AMRC-C165).